Reading from the N-terminus, the 101-residue chain is Apolipoprotein C-II (101 aa).

The signal sequence occupies residues 1–22 (MGTRFLLALCLVLLVLGFEVQG). A propeptide spans 23 to 28 (AQLPQQ) (removed in mature form). The tract at residues 66-74 (AVDEKLRDL) is lipid binding. The lipoprotein lipase cofactor stretch occupies residues 78–101 (STAAMSTYTGIFTDQVLSVLKGEE).

This sequence belongs to the apolipoprotein C2 family. In terms of processing, proapolipoprotein C-II is synthesized as a sialic acid containing glycoprotein which is subsequently desialylated prior to its proteolytic processing. Proapolipoprotein C-II, the major form found in plasma undergoes proteolytic cleavage of its N-terminal hexapeptide to generate apolipoprotein C-II, which occurs as the minor form in plasma.

The protein resides in the secreted. Its function is as follows. Component of chylomicrons, very low-density lipoproteins (VLDL), low-density lipoproteins (LDL), and high-density lipoproteins (HDL) in plasma. Plays an important role in lipoprotein metabolism as an activator of lipoprotein lipase. Both proapolipoprotein C-II and apolipoprotein C-II can activate lipoprotein lipase. This Papio anubis (Olive baboon) protein is Apolipoprotein C-II (APOC2).